The primary structure comprises 175 residues: MADEELKPVPAAAEAIVPSGPTSQWLTENGFAHESLAADKNGVEIIKVEPDFLLPIATALYAYGFNYLQFQGGIDLGPGQDLVSVYHLVKVSDNADKPEEVRVKVFLPRENPVVPSVYWIWKTADWQERESYDMFGIIYEGHPNLKRILMPEDWVGWPLRKDYISPDFYELQDAY.

This sequence belongs to the complex I 30 kDa subunit family. In terms of assembly, NDH-1 can be composed of about 15 different subunits; different subcomplexes with different compositions have been identified which probably have different functions.

The protein localises to the cellular thylakoid membrane. The catalysed reaction is a plastoquinone + NADH + (n+1) H(+)(in) = a plastoquinol + NAD(+) + n H(+)(out). It carries out the reaction a plastoquinone + NADPH + (n+1) H(+)(in) = a plastoquinol + NADP(+) + n H(+)(out). In terms of biological role, NDH-1 shuttles electrons from an unknown electron donor, via FMN and iron-sulfur (Fe-S) centers, to quinones in the respiratory and/or the photosynthetic chain. The immediate electron acceptor for the enzyme in this species is believed to be plastoquinone. Couples the redox reaction to proton translocation, and thus conserves the redox energy in a proton gradient. Cyanobacterial NDH-1 also plays a role in inorganic carbon-concentration. The polypeptide is NAD(P)H-quinone oxidoreductase subunit J (Trichormus variabilis (strain ATCC 29413 / PCC 7937) (Anabaena variabilis)).